The chain runs to 294 residues: MDAKQTRQGVLLALAAYFIWGIAPAYFKLIYYVPADEILTHRVIWSFFFMVALLSVSRQWRQVKRLLKTPKKIFLLALSAVLVGGNWLLFIWAVNNHHMLEASLGYFINPLVNILLGMIFLGERFRRMQWLAVILAVCGVLVQLWTFGSLPIIALGLAFSFAFYGLVRKKIAVEAQTGMLVETLWLLPVAAIYLFSIADSATSHMGQNALSLNLLLMAAGVVTTIPLLCFTGAATRLRLSTLGFFQYIGPTLMFLLAVTFYGEVPGADKMVTFAFIWVALAIFVMDAIYTQRKK.

The Cytoplasmic segment spans residues 1–11 (MDAKQTRQGVL). A helical membrane pass occupies residues 12 to 34 (LALAAYFIWGIAPAYFKLIYYVP). The EamA domain occupies 18-145 (FIWGIAPAYF…AVCGVLVQLW (128 aa)). The Periplasmic segment spans residues 35 to 37 (ADE). Residues 38-60 (ILTHRVIWSFFFMVALLSVSRQW) form a helical membrane-spanning segment. The Cytoplasmic portion of the chain corresponds to 61 to 72 (RQVKRLLKTPKK). A helical membrane pass occupies residues 73 to 95 (IFLLALSAVLVGGNWLLFIWAVN). The Periplasmic portion of the chain corresponds to 96–99 (NHHM). A helical membrane pass occupies residues 100 to 122 (LEASLGYFINPLVNILLGMIFLG). The Cytoplasmic segment spans residues 123-128 (ERFRRM). The helical transmembrane segment at 129-146 (QWLAVILAVCGVLVQLWT) threads the bilayer. Over 147-149 (FGS) the chain is Periplasmic. Residues 150 to 167 (LPIIALGLAFSFAFYGLV) form a helical membrane-spanning segment. Topologically, residues 168 to 179 (RKKIAVEAQTGM) are cytoplasmic. A helical membrane pass occupies residues 180-197 (LVETLWLLPVAAIYLFSI). Over 198–211 (ADSATSHMGQNALS) the chain is Periplasmic. A helical membrane pass occupies residues 212–234 (LNLLLMAAGVVTTIPLLCFTGAA). Topologically, residues 235 to 238 (TRLR) are cytoplasmic. Residues 239–261 (LSTLGFFQYIGPTLMFLLAVTFY) form a helical membrane-spanning segment. Topologically, residues 262-270 (GEVPGADKM) are periplasmic. A helical membrane pass occupies residues 271-290 (VTFAFIWVALAIFVMDAIYT). The Cytoplasmic portion of the chain corresponds to 291-294 (QRKK).

This sequence belongs to the EamA transporter family.

It is found in the cell inner membrane. This is Protein RarD (rarD) from Salmonella typhi.